The following is a 475-amino-acid chain: Ribulose bisphosphate carboxylase large chain (475 aa).

Residues 1 to 2 constitute a propeptide that is removed on maturation; the sequence is MS. Pro-3 carries the post-translational modification N-acetylproline. An N6,N6,N6-trimethyllysine modification is found at Lys-14. The substrate site is built by Asn-123 and Thr-173. The Proton acceptor role is filled by Lys-175. Residue Lys-177 participates in substrate binding. Mg(2+)-binding residues include Lys-201, Asp-203, and Glu-204. Lys-201 carries the N6-carboxylysine modification. His-294 functions as the Proton acceptor in the catalytic mechanism. Substrate-binding residues include Arg-295, His-327, and Ser-379.

It belongs to the RuBisCO large chain family. Type I subfamily. As to quaternary structure, heterohexadecamer of 8 large chains and 8 small chains; disulfide-linked. The disulfide link is formed within the large subunit homodimers. Mg(2+) is required as a cofactor. The disulfide bond which can form in the large chain dimeric partners within the hexadecamer appears to be associated with oxidative stress and protein turnover.

Its subcellular location is the plastid. The protein localises to the chloroplast. The enzyme catalyses 2 (2R)-3-phosphoglycerate + 2 H(+) = D-ribulose 1,5-bisphosphate + CO2 + H2O. It catalyses the reaction D-ribulose 1,5-bisphosphate + O2 = 2-phosphoglycolate + (2R)-3-phosphoglycerate + 2 H(+). In terms of biological role, ruBisCO catalyzes two reactions: the carboxylation of D-ribulose 1,5-bisphosphate, the primary event in carbon dioxide fixation, as well as the oxidative fragmentation of the pentose substrate in the photorespiration process. Both reactions occur simultaneously and in competition at the same active site. In Picea sitchensis (Sitka spruce), this protein is Ribulose bisphosphate carboxylase large chain.